Here is a 272-residue protein sequence, read N- to C-terminus: MICOS complex subunit MIC27 (272 aa).

A mitochondrion-targeting transit peptide spans 1–24 (MAAKVARLAAAASSLPFVCAVYAE). At 28–107 (SKSQLVKPKQ…YVYLKNPPPD (80 aa)) the chain is on the mitochondrial intermembrane side. The helical transmembrane segment at 108 to 126 (FLPRVGIITISGLAGVVLA) threads the bilayer. The Mitochondrial matrix segment spans residues 127–134 (RKDSRFKK). The chain crosses the membrane as a helical span at residues 135–152 (IAYPLGLTTLGISVCYPA). Over 153–272 (QAVVIAKITG…EDVDMYSTRS (120 aa)) the chain is Mitochondrial intermembrane. The segment at 187–272 (SKLQQESKSV…EDVDMYSTRS (86 aa)) is disordered. Composition is skewed to polar residues over residues 188–198 (KLQQESKSVTQ) and 206–245 (ISNV…TVKT).

This sequence belongs to the apolipoprotein O/MICOS complex subunit Mic27 family. In terms of assembly, component of the mitochondrial contact site and cristae organizing system (MICOS) complex (also known as MINOS or MitOS complex).

The protein resides in the mitochondrion inner membrane. In terms of biological role, component of the MICOS complex, a large protein complex of the mitochondrial inner membrane that plays crucial roles in the maintenance of crista junctions, inner membrane architecture, and formation of contact sites to the outer membrane. The chain is MICOS complex subunit MIC27 (APOOL) from Gallus gallus (Chicken).